The following is a 506-amino-acid chain: Maturase K (506 aa).

It belongs to the intron maturase 2 family. MatK subfamily.

The protein localises to the plastid. It is found in the chloroplast. In terms of biological role, usually encoded in the trnK tRNA gene intron. Probably assists in splicing its own and other chloroplast group II introns. In Prunus persica (Peach), this protein is Maturase K.